Here is a 464-residue protein sequence, read N- to C-terminus: Putative dipeptidase CPC735_014430 (464 aa).

The tract at residues 1–34 (MSTMSARDNEKGSARSQPSHAAASEIENVPRPSR) is disordered. The chain crosses the membrane as a helical span at residues 40–56 (GTMIKVFIICACAGIVS). Zn(2+) is bound by residues His93, Asp95, and Glu206. Cys145 and Cys235 are oxidised to a cystine. Residue His233 coordinates substrate. Residues His277 and His298 each coordinate Zn(2+). Substrate-binding residues include Arg309 and Asp369. An N-linked (GlcNAc...) asparagine glycan is attached at Asn382.

Belongs to the metallo-dependent hydrolases superfamily. Peptidase M19 family. Zn(2+) is required as a cofactor.

Its subcellular location is the membrane. It catalyses the reaction an L-aminoacyl-L-amino acid + H2O = 2 an L-alpha-amino acid. Hydrolyzes a wide range of dipeptides. This Coccidioides posadasii (strain C735) (Valley fever fungus) protein is Putative dipeptidase CPC735_014430.